Here is a 1301-residue protein sequence, read N- to C-terminus: ABC transporter BEA3 (1301 aa).

Residues 1–30 (MGKRTAENSAANGEGEEKHPEIGVDGRPEK) are disordered. Basic and acidic residues predominate over residues 15-30 (GEEKHPEIGVDGRPEK). Transmembrane regions (helical) follow at residues 54 to 74 (VGVIASIGVGITLPLLNIVFG), 103 to 123 (LYLLGLFLGRLVLGYITNFAF), 177 to 197 (LGVFVEYNATMIASIIVAFIY), and 203 to 223 (LVTFTAVVFITFSVSLVLPYI). Residues 54–345 (VGVIASIGVG…ISTPLLAVSK (292 aa)) enclose the ABC transmembrane type-1 1 domain. An N-linked (GlcNAc...) asparagine glycan is attached at Asn-229. The next 2 membrane-spanning stretches (helical) occupy residues 281–301 (FIALQYGLVFFSSYAAFGLAF) and 313–333 (INQLGAIIVVLFSVMMIVTAM). Residues 378 to 667 (IILEDVTFAY…EAGLYYNLVN (290 aa)) form the ABC transporter 1 domain. 413–420 (GPSGSGKS) is an ATP binding site. Basic and acidic residues predominate over residues 442-454 (VEKPTDKKNNGGK). A disordered region spans residues 442–461 (VEKPTDKKNNGGKEEDEQEL). N-linked (GlcNAc...) asparagine glycosylation is found at Asn-511 and Asn-618. A disordered region spans residues 682–708 (VIAKEERPSSVHEKAHTESTIEEKPLE). The region spanning 735–1024 (ALTLFFSACA…ALSFGPNVAQ (290 aa)) is the ABC transmembrane type-1 2 domain. Helical transmembrane passes span 745–765 (GAAVPFQAWLFAKVIIVFGYL), 779–799 (SLMWTVLAISAGLAYCATFFL), 858–878 (SVFIALWTLMGTIAIALAFAW), 880–900 (LALVSLCVVVPILLAAGYWRM), 961–981 (WVSLLYAFSDSATIGCQAIVL), and 987–1007 (LLLSGEYDLESFFVCFMSVLN). The ABC transporter 2 domain maps to 1060 to 1296 (IELENIYFKY…RGVYWQMCQS (237 aa)). 1094-1101 (GASGSGKS) is an ATP binding site.

Belongs to the ABC transporter superfamily. ABCB family. Multidrug resistance exporter (TC 3.A.1.201) subfamily.

Its subcellular location is the cell membrane. ABC transporter; part of the gene cluster that mediates the biosynthesis of beauvericin (BEA), a non-ribosomal cyclic hexadepsipeptide that shows antibiotic, antifungal, insecticidal, and cancer cell antiproliferative and antihaptotactic activity. Functions as a regulator of beauvericin production, rather than in BEA transport out of the cell. Beauvericin has low toxicity to the producing fungus and BEA3 does not play a role in detoxification and self-protection of the producing fungus. The polypeptide is ABC transporter BEA3 (Gibberella fujikuroi (strain CBS 195.34 / IMI 58289 / NRRL A-6831) (Bakanae and foot rot disease fungus)).